The sequence spans 92 residues: Small ribosomal subunit protein uS19 (92 aa).

It belongs to the universal ribosomal protein uS19 family.

Protein S19 forms a complex with S13 that binds strongly to the 16S ribosomal RNA. The chain is Small ribosomal subunit protein uS19 from Bartonella bacilliformis (strain ATCC 35685 / KC583 / Herrer 020/F12,63).